Reading from the N-terminus, the 188-residue chain is 3-deoxy-D-manno-octulosonate 8-phosphate phosphatase KdsC (188 aa).

Mg(2+) contacts are provided by D32 and D34. Residues D34, 55–59 (NVRDG), R63, R78, R86, and K102 each bind substrate. D125 contributes to the Mg(2+) binding site.

It belongs to the KdsC family. As to quaternary structure, homotetramer. Requires Mg(2+) as cofactor.

The catalysed reaction is 3-deoxy-alpha-D-manno-2-octulosonate-8-phosphate + H2O = 3-deoxy-alpha-D-manno-oct-2-ulosonate + phosphate. It participates in carbohydrate biosynthesis; 3-deoxy-D-manno-octulosonate biosynthesis; 3-deoxy-D-manno-octulosonate from D-ribulose 5-phosphate: step 3/3. Its pathway is bacterial outer membrane biogenesis; lipopolysaccharide biosynthesis. Its function is as follows. Catalyzes the hydrolysis of 3-deoxy-D-manno-octulosonate 8-phosphate (KDO 8-P) to 3-deoxy-D-manno-octulosonate (KDO) and inorganic phosphate. This Escherichia coli (strain K12) protein is 3-deoxy-D-manno-octulosonate 8-phosphate phosphatase KdsC.